Consider the following 471-residue polypeptide: Trigger factor (471 aa).

One can recognise a PPIase FKBP-type domain in the interval 165–244; it reads GDFVSIDLRA…VQSVKERVLP (80 aa). Positions 407–471 are disordered; sequence VTDASGNPVD…EATAEDPAKS (65 aa). Over residues 416–443 the composition is skewed to acidic residues; that stretch reads DLEELVGGTEEDDVTEDATEDVTEDAAP.

It belongs to the FKBP-type PPIase family. Tig subfamily.

It is found in the cytoplasm. The catalysed reaction is [protein]-peptidylproline (omega=180) = [protein]-peptidylproline (omega=0). In terms of biological role, involved in protein export. Acts as a chaperone by maintaining the newly synthesized protein in an open conformation. Functions as a peptidyl-prolyl cis-trans isomerase. In Kineococcus radiotolerans (strain ATCC BAA-149 / DSM 14245 / SRS30216), this protein is Trigger factor.